The primary structure comprises 101 residues: Small ribosomal subunit protein uS14 (101 aa).

Belongs to the universal ribosomal protein uS14 family. As to quaternary structure, part of the 30S ribosomal subunit. Contacts proteins S3 and S10.

Binds 16S rRNA, required for the assembly of 30S particles and may also be responsible for determining the conformation of the 16S rRNA at the A site. This Shewanella piezotolerans (strain WP3 / JCM 13877) protein is Small ribosomal subunit protein uS14.